Here is a 1082-residue protein sequence, read N- to C-terminus: SURP and G-patch domain-containing protein 2 (1082 aa).

At T7 the chain carries Phosphothreonine. Residues 65–97 are disordered; the sequence is LSGSVAHSRDAGREGLRSDVFPGPSFRSSNPSI. The span at 71 to 81 shows a compositional bias: basic and acidic residues; that stretch reads HSRDAGREGLR. Phosphoserine is present on residues S96 and S224. Residue K228 forms a Glycyl lysine isopeptide (Lys-Gly) (interchain with G-Cter in SUMO2) linkage. A Phosphothreonine modification is found at T275. A Phosphoserine modification is found at S277. Residue K305 forms a Glycyl lysine isopeptide (Lys-Gly) (interchain with G-Cter in SUMO2) linkage. A phosphoserine mark is found at S315, S573, and S603. An SURP motif 1 repeat occupies 590–633; it reads IDQLVKRVIEGSLSPKERTLLKEDPAYWFLSDENSLEYKYYKLK. A Glycyl lysine isopeptide (Lys-Gly) (interchain with G-Cter in SUMO2) cross-link involves residue K650. The disordered stretch occupies residues 694 to 779; that stretch reads RRATTGTQTL…QTSSPCPSAD (86 aa). Residues 697–708 are compositionally biased toward low complexity; the sequence is TTGTQTLLSSGT. The segment covering 727-738 has biased composition (basic and acidic residues); it reads LPDRNDAAKDCP. Phosphoserine occurs at positions 754 and 757. The stretch at 787–830 is one SURP motif 2 repeat; sequence TAEKLARFVAQVGPEIEQFSIENSTDNPDLWFLHDQNSSAFKFY. Disordered stretches follow at residues 849-930, 982-1002, and 1030-1061; these read NLHT…EAAE, RIAY…PKDL, and LGSL…EHKE. The residue at position 863 (S863) is a Phosphoserine. Acidic residues-rich tracts occupy residues 868–877 and 885–904; these read MEGEAEFEDE and LESP…DGGE. Over residues 990-999 the composition is skewed to basic residues; that stretch reads GRPMSKKKKP. The Nuclear localization signal signature appears at 995-1000; sequence KKKKPK. The region spanning 1011–1057 is the G-patch domain; sequence DKNLGFQMLQKMGWKEGHGLGSLGKGIREPVSVGTPSEGEGLGADGQ.

In terms of tissue distribution, detected in adult testis, and in fetal brain and kidney.

It is found in the nucleus. Its function is as follows. May play a role in mRNA splicing. The sequence is that of SURP and G-patch domain-containing protein 2 (SUGP2) from Homo sapiens (Human).